A 185-amino-acid polypeptide reads, in one-letter code: Pyruvate/ketoisovalerate oxidoreductases common subunit gamma (185 aa).

In terms of assembly, heterotetramer of one alpha, one beta, one delta and one gamma chain.

It carries out the reaction 2 oxidized [2Fe-2S]-[ferredoxin] + pyruvate + CoA = 2 reduced [2Fe-2S]-[ferredoxin] + acetyl-CoA + CO2 + H(+). The enzyme catalyses 3-methyl-2-oxobutanoate + 2 oxidized [2Fe-2S]-[ferredoxin] + CoA = 2-methylpropanoyl-CoA + 2 reduced [2Fe-2S]-[ferredoxin] + CO2 + H(+). The protein is Pyruvate/ketoisovalerate oxidoreductases common subunit gamma (porG) of Pyrococcus abyssi (strain GE5 / Orsay).